Here is a 452-residue protein sequence, read N- to C-terminus: Fructose-2,6-bisphosphatase (452 aa).

The 6-phosphofructo-2-kinase stretch occupies residues M1–K223. G20–F28 contacts ATP. Beta-D-fructose 6-phosphate-binding residues include R53 and R78. D104 is an active-site residue. Residues T106 and R112 each coordinate beta-D-fructose 6-phosphate. N143 to G148 is an ATP binding site. R169 and Y173 together coordinate beta-D-fructose 6-phosphate. The tract at residues P224–F452 is fructose-2,6-bisphosphatase. R231 contacts beta-D-fructose 2,6-bisphosphate. H232 (tele-phosphohistidine intermediate) is an active-site residue. Residues N238 and G244 each coordinate beta-D-fructose 2,6-bisphosphate. E302 serves as the catalytic Proton donor/acceptor. Y313, R327, K331, Y342, Q368, and R372 together coordinate beta-D-fructose 2,6-bisphosphate. ATP is bound at residue F324–R327. Residues Q368–R372 and Y404 each bind ATP. Phosphoserine is present on residues S435 and S446.

In the C-terminal section; belongs to the phosphoglycerate mutase family.

It catalyses the reaction beta-D-fructose 2,6-bisphosphate + H2O = beta-D-fructose 6-phosphate + phosphate. With respect to regulation, inhibited by fructose 6-P, activated by glycerol 3-P. Monofunctional, high-specificity fructose-2,6-bisphosphatase, which releases phosphate from the 2-position of fructose 2,6-bisphosphate. Has no detectable 6-phosphofructo-2-kinase activity. This is Fructose-2,6-bisphosphatase from Saccharomyces cerevisiae (strain ATCC 204508 / S288c) (Baker's yeast).